We begin with the raw amino-acid sequence, 424 residues long: UPF0229 protein ECA2349 (424 aa).

The interval 53-111 (SIPNADINEPMFHQGRGGHRHRVHPGNDHFVQNDKIERPQGGGGSGSGQGDASKDGEGD) is disordered. The segment covering 77–90 (PGNDHFVQNDKIER) has biased composition (basic and acidic residues). Gly residues predominate over residues 92-101 (QGGGGSGSGQ).

The protein belongs to the UPF0229 family.

The protein is UPF0229 protein ECA2349 of Pectobacterium atrosepticum (strain SCRI 1043 / ATCC BAA-672) (Erwinia carotovora subsp. atroseptica).